Consider the following 500-residue polypeptide: L-arabinose isomerase (500 aa).

The Mn(2+) site is built by Glu306, Glu333, His350, and His450.

This sequence belongs to the arabinose isomerase family. In terms of assembly, homohexamer. Requires Mn(2+) as cofactor.

It catalyses the reaction beta-L-arabinopyranose = L-ribulose. The protein operates within carbohydrate degradation; L-arabinose degradation via L-ribulose; D-xylulose 5-phosphate from L-arabinose (bacterial route): step 1/3. In terms of biological role, catalyzes the conversion of L-arabinose to L-ribulose. In Salmonella choleraesuis (strain SC-B67), this protein is L-arabinose isomerase.